The chain runs to 369 residues: 4-hydroxy-3-methylbut-2-en-1-yl diphosphate synthase (flavodoxin) (369 aa).

The [4Fe-4S] cluster site is built by Cys270, Cys273, Cys305, and Glu312.

It belongs to the IspG family. [4Fe-4S] cluster serves as cofactor.

The enzyme catalyses (2E)-4-hydroxy-3-methylbut-2-enyl diphosphate + oxidized [flavodoxin] + H2O + 2 H(+) = 2-C-methyl-D-erythritol 2,4-cyclic diphosphate + reduced [flavodoxin]. Its pathway is isoprenoid biosynthesis; isopentenyl diphosphate biosynthesis via DXP pathway; isopentenyl diphosphate from 1-deoxy-D-xylulose 5-phosphate: step 5/6. In terms of biological role, converts 2C-methyl-D-erythritol 2,4-cyclodiphosphate (ME-2,4cPP) into 1-hydroxy-2-methyl-2-(E)-butenyl 4-diphosphate. The sequence is that of 4-hydroxy-3-methylbut-2-en-1-yl diphosphate synthase (flavodoxin) from Pseudomonas fluorescens (strain SBW25).